The chain runs to 644 residues: uncharacterized protein (644 aa).

Residues 65–117 (DSDVETTGGGGRGSTTSTEDRIDEHDDAIEDDGVSNEEDENQDAEQEQEVDLN) are disordered. A compositionally biased stretch (acidic residues) spans 89 to 114 (HDDAIEDDGVSNEEDENQDAEQEQEV).

This is an uncharacterized protein from Arabidopsis thaliana (Mouse-ear cress).